Here is a 166-residue protein sequence, read N- to C-terminus: UPF0561 protein C2orf68 (166 aa).

The disordered stretch occupies residues 32 to 107 (NQIARDDYDK…SELEPSGHQL (76 aa)). Composition is skewed to basic and acidic residues over residues 34 to 49 (IARD…AAKE) and 73 to 85 (RHRD…RNPD). Over residues 91-104 (ESSSSGGSELEPSG) the composition is skewed to low complexity.

It belongs to the UPF0561 family.

The protein is UPF0561 protein C2orf68 (C2orf68) of Homo sapiens (Human).